Consider the following 397-residue polypeptide: 1-deoxy-D-xylulose 5-phosphate reductoisomerase (397 aa).

NADPH is bound by residues Ser10, Gly11, Ser12, Ile13, Ala36, Arg37, and Asn124. 1-deoxy-D-xylulose 5-phosphate is bound at residue Lys125. Glu126 is an NADPH binding site. Mn(2+) is bound at residue Asp150. Residues Ser151, Glu152, Ser186, and His209 each coordinate 1-deoxy-D-xylulose 5-phosphate. Glu152 contacts Mn(2+). Gly215 serves as a coordination point for NADPH. 1-deoxy-D-xylulose 5-phosphate is bound by residues Ser222, Asn227, Lys228, and Glu231. Position 231 (Glu231) interacts with Mn(2+).

The protein belongs to the DXR family. Mg(2+) is required as a cofactor. Requires Mn(2+) as cofactor.

The catalysed reaction is 2-C-methyl-D-erythritol 4-phosphate + NADP(+) = 1-deoxy-D-xylulose 5-phosphate + NADPH + H(+). Its pathway is isoprenoid biosynthesis; isopentenyl diphosphate biosynthesis via DXP pathway; isopentenyl diphosphate from 1-deoxy-D-xylulose 5-phosphate: step 1/6. Functionally, catalyzes the NADPH-dependent rearrangement and reduction of 1-deoxy-D-xylulose-5-phosphate (DXP) to 2-C-methyl-D-erythritol 4-phosphate (MEP). This Aeromonas hydrophila subsp. hydrophila (strain ATCC 7966 / DSM 30187 / BCRC 13018 / CCUG 14551 / JCM 1027 / KCTC 2358 / NCIMB 9240 / NCTC 8049) protein is 1-deoxy-D-xylulose 5-phosphate reductoisomerase.